Consider the following 435-residue polypeptide: Maltodextrin transport system permease protein MalC (435 aa).

Transmembrane regions (helical) follow at residues 34–54, 73–93, 130–150, 199–219, 230–250, 263–283, 294–314, 338–358, 371–391, and 404–424; these read GFIF…LATP, FMLI…LFYF, YLLI…PVIV, IIWA…TAII, IFGV…ILTF, TQVL…LIPW, LIMM…LGIL, NITF…QYTF, GGGP…ISWI, and MAAA…MIAF. Residues 195–423 form the ABC transmembrane type-1 domain; sequence LSWTIIWALA…IIVISISMIA (229 aa).

It belongs to the binding-protein-dependent transport system permease family. MalFG subfamily.

It localises to the cell membrane. In terms of biological role, part of the binding-protein-dependent transport system for maltodextrin; probably responsible for the translocation of the substrate across the membrane. The chain is Maltodextrin transport system permease protein MalC (malC) from Streptococcus pneumoniae serotype 4 (strain ATCC BAA-334 / TIGR4).